Reading from the N-terminus, the 637-residue chain is Acetolactate synthase 2, chloroplastic (637 aa).

A chloroplast-targeting transit peptide spans 1 to 73; sequence MASFSFFGTI…SSKYAPNVPR (73 aa). The tract at residues 35–69 is disordered; sequence RRATRVSVSANSKKDQDRTASRRENPSTFSSKYAP. The span at 46–59 shows a compositional bias: basic and acidic residues; that stretch reads SKKDQDRTASRREN. Glu-120 serves as a coordination point for thiamine diphosphate. FAD contacts are provided by residues Arg-222, 329-350, and 372-391; these read HGTV…FGVR and DIDS…VCCD. Residues 462–542 form a thiamine pyrophosphate binding region; sequence QHQMWAAQFY…VKVLLINNQH (81 aa). Residues Asp-513 and Asn-540 each contribute to the Mg(2+) site.

The protein belongs to the TPP enzyme family. Requires Mg(2+) as cofactor. It depends on thiamine diphosphate as a cofactor.

It is found in the plastid. It localises to the chloroplast. The catalysed reaction is 2 pyruvate + H(+) = (2S)-2-acetolactate + CO2. The protein operates within amino-acid biosynthesis; L-isoleucine biosynthesis; L-isoleucine from 2-oxobutanoate: step 1/4. Its pathway is amino-acid biosynthesis; L-valine biosynthesis; L-valine from pyruvate: step 1/4. In Brassica napus (Rape), this protein is Acetolactate synthase 2, chloroplastic.